A 621-amino-acid polypeptide reads, in one-letter code: ATP-dependent lipid A-core flippase (621 aa).

Helical transmembrane passes span 32–52 (IVAA…LAAF), 91–111 (VWGT…LVVI), 192–212 (IVLL…FPLL), 286–306 (SPFS…IALW), and 312–332 (YTTI…YAPI). The ABC transmembrane type-1 domain maps to 33–344 (VAALIAIFGV…LANISIPMQT (312 aa)). The ABC transporter domain maps to 378-611 (FRNVDVEYRS…NGYYTMLRNI (234 aa)). ATP is bound at residue 410–417 (GRSGSGKS).

Belongs to the ABC transporter superfamily. Lipid exporter (TC 3.A.1.106) family. As to quaternary structure, homodimer.

It localises to the cell inner membrane. The enzyme catalyses ATP + H2O + lipid A-core oligosaccharideSide 1 = ADP + phosphate + lipid A-core oligosaccharideSide 2.. Involved in lipopolysaccharide (LPS) biosynthesis. Translocates lipid A-core from the inner to the outer leaflet of the inner membrane. Transmembrane domains (TMD) form a pore in the inner membrane and the ATP-binding domain (NBD) is responsible for energy generation. The polypeptide is ATP-dependent lipid A-core flippase (Neisseria meningitidis serogroup A / serotype 4A (strain DSM 15465 / Z2491)).